Reading from the N-terminus, the 185-residue chain is Ribosome-recycling factor (185 aa).

Belongs to the RRF family.

The protein resides in the cytoplasm. Responsible for the release of ribosomes from messenger RNA at the termination of protein biosynthesis. May increase the efficiency of translation by recycling ribosomes from one round of translation to another. This Desulforapulum autotrophicum (strain ATCC 43914 / DSM 3382 / VKM B-1955 / HRM2) (Desulfobacterium autotrophicum) protein is Ribosome-recycling factor.